A 110-amino-acid chain; its full sequence is uncharacterized protein (110 aa).

Residues 1–16 (MSVKLKYDKIDQRNGD) are compositionally biased toward basic and acidic residues. Disordered stretches follow at residues 1–29 (MSVK…GNGN) and 73–100 (IKQQ…ESPN). Over residues 20–29 (GNHNNCGNGN) the composition is skewed to low complexity.

This is an uncharacterized protein from Dictyostelium discoideum (Social amoeba).